The following is a 467-amino-acid chain: Inactive pancreatic lipase-related protein 1 (467 aa).

A signal peptide spans 1–17 (MVSIWTIALFLLGAAKA). Disulfide bonds link cysteine 21/cysteine 27 and cysteine 109/cysteine 120. N-linked (GlcNAc...) asparagine glycosylation is present at asparagine 157. Serine 171 serves as the catalytic Nucleophile. The active-site Charge relay system is aspartate 194. Residues glutamate 205, arginine 208, aspartate 210, and aspartate 213 each coordinate Ca(2+). Cysteine 255 and cysteine 279 are disulfide-bonded. Residue histidine 281 is the Charge relay system of the active site. Disulfide bonds link cysteine 303–cysteine 314, cysteine 317–cysteine 322, and cysteine 451–cysteine 467. One can recognise a PLAT domain in the interval 356-467 (WRYGVSITLS…EDVLLTLTPC (112 aa)).

It belongs to the AB hydrolase superfamily. Lipase family. As to expression, detected in pancreas (at protein level).

It localises to the secreted. Functionally, may function as inhibitor of dietary triglyceride digestion. Lacks detectable lipase activity towards triglycerides, diglycerides, phosphatidylcholine, galactolipids or cholesterol esters (in vitro). This chain is Inactive pancreatic lipase-related protein 1 (PNLIPRP1), found in Canis lupus familiaris (Dog).